We begin with the raw amino-acid sequence, 458 residues long: UDP-N-acetylmuramoylalanine--D-glutamate ligase (458 aa).

124–130 is a binding site for ATP; sequence GSDGKTT.

Belongs to the MurCDEF family.

It localises to the cytoplasm. It catalyses the reaction UDP-N-acetyl-alpha-D-muramoyl-L-alanine + D-glutamate + ATP = UDP-N-acetyl-alpha-D-muramoyl-L-alanyl-D-glutamate + ADP + phosphate + H(+). The protein operates within cell wall biogenesis; peptidoglycan biosynthesis. Its function is as follows. Cell wall formation. Catalyzes the addition of glutamate to the nucleotide precursor UDP-N-acetylmuramoyl-L-alanine (UMA). This chain is UDP-N-acetylmuramoylalanine--D-glutamate ligase, found in Clostridium perfringens (strain 13 / Type A).